The chain runs to 361 residues: Peptide chain release factor 1 (361 aa).

The residue at position 235 (Gln235) is an N5-methylglutamine. The disordered stretch occupies residues 287–309; it reads QKEASAMRSAQVGSGDRSERIRT.

The protein belongs to the prokaryotic/mitochondrial release factor family. In terms of processing, methylated by PrmC. Methylation increases the termination efficiency of RF1.

It is found in the cytoplasm. In terms of biological role, peptide chain release factor 1 directs the termination of translation in response to the peptide chain termination codons UAG and UAA. The protein is Peptide chain release factor 1 of Chlamydia caviae (strain ATCC VR-813 / DSM 19441 / 03DC25 / GPIC) (Chlamydophila caviae).